The following is a 120-amino-acid chain: Large ribosomal subunit protein uL18 (120 aa).

This sequence belongs to the universal ribosomal protein uL18 family. Part of the 50S ribosomal subunit; part of the 5S rRNA/L5/L18/L25 subcomplex. Contacts the 5S and 23S rRNAs.

Its function is as follows. This is one of the proteins that bind and probably mediate the attachment of the 5S RNA into the large ribosomal subunit, where it forms part of the central protuberance. This Bacillus cereus (strain G9842) protein is Large ribosomal subunit protein uL18.